A 170-amino-acid chain; its full sequence is UPF0260 protein RPE_1881 (170 aa).

Belongs to the UPF0260 family.

The polypeptide is UPF0260 protein RPE_1881 (Rhodopseudomonas palustris (strain BisA53)).